The sequence spans 23 residues: Septenin 2c (23 aa).

In terms of tissue distribution, expressed in skin granular glands.

The protein localises to the secreted. Its function is as follows. May act as an antimicrobial peptide. The sequence is that of Septenin 2c from Osteopilus septentrionalis (Cuban treefrog).